The sequence spans 282 residues: (4-alkanoyl-5-oxo-2,5-dihydrofuran-3-yl)methyl phosphate reductase (282 aa).

6–11 (GATGAV) contributes to the NADP(+) binding site.

The protein belongs to the NmrA-type oxidoreductase family.

The enzyme catalyses a [(3S,4R)-4-alkanoyl-5-oxooxolan-3-yl]methyl phosphate + NADP(+) = a (4-alkanoyl-5-oxo-2,5-dihydrofuran-3-yl)methyl phosphate + NADPH + H(+). The catalysed reaction is [(3S,4R)-4-(6-methylheptanoyl)-5-oxooxolan-3-yl]methyl phosphate + NADP(+) = [4-(6-methylheptanoyl)-5-oxo-2H-furan-3-yl]methyl phosphate + NADPH + H(+). Its function is as follows. Involved in the biosynthesis of A factor (2-isocapryloyl-3R-hydroxymethyl-gamma-butyrolactone), a gamma-butyrolactone autoregulator that triggers secondary metabolism and morphogenesis in Streptomyces. Catalyzes the reduction of the butenolide phosphate produced by nonenzymatic intramolecular condensation of the 8-methyl-3-oxononanoyl-DHAP ester. The chain is (4-alkanoyl-5-oxo-2,5-dihydrofuran-3-yl)methyl phosphate reductase from Streptomyces griseus subsp. griseus (strain JCM 4626 / CBS 651.72 / NBRC 13350 / KCC S-0626 / ISP 5235).